A 440-amino-acid polypeptide reads, in one-letter code: C4-dicarboxylate TRAP transporter large permease protein DctM (440 aa).

The next 13 membrane-spanning stretches (helical) occupy residues 4–24 (LIIF…SISL), 54–74 (FEIM…HGGV), 89–109 (WHGG…AVSG), 112–132 (PATV…QGFP), 148–168 (ILIP…GMVV), 181–201 (VGEL…FLAF), 230–250 (AAWG…GIFT), 255–275 (AAMS…DLTL), 291–311 (MLLY…HEGI), 318–338 (WMVN…ILLL), 349–369 (IVLI…IDPV), 370–390 (HFGI…PVGL), and 410–430 (VWPW…VPAI).

It belongs to the TRAP transporter large permease family. In terms of assembly, the complex comprises the extracytoplasmic solute receptor protein DctP, and the two transmembrane proteins DctQ and DctM.

It localises to the cell inner membrane. Its function is as follows. Part of the tripartite ATP-independent periplasmic (TRAP) transport system DctPQM involved in C4-dicarboxylates uptake. The protein is C4-dicarboxylate TRAP transporter large permease protein DctM of Rhodobacter capsulatus (Rhodopseudomonas capsulata).